Here is a 493-residue protein sequence, read N- to C-terminus: Galactose-1-phosphate uridylyltransferase (493 aa).

This sequence belongs to the galactose-1-phosphate uridylyltransferase type 2 family.

Its subcellular location is the cytoplasm. It catalyses the reaction alpha-D-galactose 1-phosphate + UDP-alpha-D-glucose = alpha-D-glucose 1-phosphate + UDP-alpha-D-galactose. It participates in carbohydrate metabolism; galactose metabolism. This is Galactose-1-phosphate uridylyltransferase from Lactococcus lactis subsp. cremoris (strain MG1363).